We begin with the raw amino-acid sequence, 540 residues long: Transcription initiation factor IIF subunit alpha (540 aa).

Residues 1–26 are compositionally biased toward basic and acidic residues; that stretch reads MDSQETKVFENVKQENPDEKKPKVEE. 2 disordered regions span residues 1–39 and 70–106; these read MDSQ…QSQQ and IDPS…SSSN. Polar residues-rich tracts occupy residues 29–39 and 89–106; these read SQNNASTQSQQ and APSS…SSSN. Residues Ser259 and Ser261 each carry the phosphoserine modification. Positions 280 to 382 form a coiled coil; that stretch reads MEGNEEDNKK…REEKLKSRFS (103 aa). Residues 341-416 form a disordered region; it reads YESDEEDEDP…SSQLQSPNTS (76 aa). Residues 359–369 show a composition bias toward acidic residues; sequence SEEEVLQEEEE. Positions 381–416 are enriched in polar residues; sequence FSANASKTNTPRPLERTPSSVSPVKASSQLQSPNTS. Ser399 carries the phosphoserine modification.

The protein belongs to the TFIIF alpha subunit family. As to quaternary structure, component of the fcp1/TFIIF/polII complex via interaction of tfg3 with both tfg1/TFIIF-alpha and tfg2/TFIIF-beta subunits.

Its subcellular location is the nucleus. Functionally, TFIIF is a general transcription initiation factor that binds to RNA polymerase II and helps to recruit it to the initiation complex in collaboration with TFIIB. It promotes transcription elongation. The protein is Transcription initiation factor IIF subunit alpha (tfg1) of Schizosaccharomyces pombe (strain 972 / ATCC 24843) (Fission yeast).